The following is a 155-amino-acid chain: Small ribosomal subunit protein uS7 (155 aa).

The protein belongs to the universal ribosomal protein uS7 family. As to quaternary structure, part of the 30S ribosomal subunit. Contacts proteins S9 and S11.

Its function is as follows. One of the primary rRNA binding proteins, it binds directly to 16S rRNA where it nucleates assembly of the head domain of the 30S subunit. Is located at the subunit interface close to the decoding center, probably blocks exit of the E-site tRNA. This is Small ribosomal subunit protein uS7 from Desulforapulum autotrophicum (strain ATCC 43914 / DSM 3382 / VKM B-1955 / HRM2) (Desulfobacterium autotrophicum).